The following is a 343-amino-acid chain: MTTDTTGRAGNPAAAASPDRFRYGFLKGNPQLTKNGELKHLLSIEGLPRSIVNHILDTAEQFVSVTDREVKKVPLLRGKSVFNLFFENSTRTRTTFEIAATRLSADVLNLNINASSTSKGESLLDTINNLSAMHADLFVVRHASSGAPYLIAEHCAPHVHVINAGDGRHAHPTQGLLDMYTIRHYKRDFTKLRVAIVGDILHSRVARSDIHALTTLGVPEVRAIGPRTLLPGGLEQMGVKVFHNLDEGLKGVDVIIMLRLQNERMSGALLPSAQEYFKTWGLTPERLALAAPDAIVMHPGPMNRGVEIDSQVADGPQSVILNQVTFGIAVRMAVMGIVAGNSD.

Arg91 and Thr92 together coordinate carbamoyl phosphate. Lys119 contributes to the L-aspartate binding site. The carbamoyl phosphate site is built by Arg141, His171, and Gln174. Residues Arg204 and Arg259 each contribute to the L-aspartate site. 2 residues coordinate carbamoyl phosphate: Gly300 and Pro301.

This sequence belongs to the aspartate/ornithine carbamoyltransferase superfamily. ATCase family. In terms of assembly, heterododecamer (2C3:3R2) of six catalytic PyrB chains organized as two trimers (C3), and six regulatory PyrI chains organized as three dimers (R2).

The catalysed reaction is carbamoyl phosphate + L-aspartate = N-carbamoyl-L-aspartate + phosphate + H(+). It participates in pyrimidine metabolism; UMP biosynthesis via de novo pathway; (S)-dihydroorotate from bicarbonate: step 2/3. In terms of biological role, catalyzes the condensation of carbamoyl phosphate and aspartate to form carbamoyl aspartate and inorganic phosphate, the committed step in the de novo pyrimidine nucleotide biosynthesis pathway. This is Aspartate carbamoyltransferase catalytic subunit from Burkholderia orbicola (strain MC0-3).